A 201-amino-acid polypeptide reads, in one-letter code: FMN-dependent NADH:quinone oxidoreductase (201 aa).

FMN contacts are provided by residues S9 and 16–18; that span reads SYS.

Belongs to the azoreductase type 1 family. As to quaternary structure, homodimer. Requires FMN as cofactor.

It catalyses the reaction 2 a quinone + NADH + H(+) = 2 a 1,4-benzosemiquinone + NAD(+). The enzyme catalyses N,N-dimethyl-1,4-phenylenediamine + anthranilate + 2 NAD(+) = 2-(4-dimethylaminophenyl)diazenylbenzoate + 2 NADH + 2 H(+). Quinone reductase that provides resistance to thiol-specific stress caused by electrophilic quinones. Functionally, also exhibits azoreductase activity. Catalyzes the reductive cleavage of the azo bond in aromatic azo compounds to the corresponding amines. The chain is FMN-dependent NADH:quinone oxidoreductase from Mesomycoplasma hyopneumoniae (strain J / ATCC 25934 / NCTC 10110) (Mycoplasma hyopneumoniae).